A 310-amino-acid chain; its full sequence is Vomeronasal type-1 receptor 47 (310 aa).

The Extracellular portion of the chain corresponds to 1-16 (MNENSRLHTHSNIRNT). Residues 17–37 (FFSEIGIGISGNSFLLLFHII) traverse the membrane as a helical segment. The Cytoplasmic segment spans residues 38 to 49 (KFFRGHRPRLTD). Residues 50–70 (LPIGLLSLIHLLMLLVAAVIA) traverse the membrane as a helical segment. Residues 71–91 (TDIFISWRGWNDIICKFLVYL) are Extracellular-facing. An intrachain disulfide couples Cys85 to Cys172. Residues 92-114 (YRSLRGLSLCTTSMLSVLQAIIL) form a helical membrane-spanning segment. The Cytoplasmic portion of the chain corresponds to 115-131 (SPRSYCLAKFKRKSSHN). The chain crosses the membrane as a helical span at residues 132-152 (ISCAIIFLSVLYMSISSHLFI). At 153 to 193 (SITATLNLTMNNFLYVSQSCSLLPLSYLMQSMYSTLLVLRE) the chain is on the extracellular side. The N-linked (GlcNAc...) asparagine glycan is linked to Asn159. The helical transmembrane segment at 194–214 (VFLIGLMVLSTSYMVALLCMH) threads the bilayer. The Cytoplasmic segment spans residues 215–238 (RKQAQNLQGTSLSLKTAPEQRATQ). The helical transmembrane segment at 239 to 259 (TILMLMTFFVLMSIFDSIVSS) threads the bilayer. At 260–269 (SRAMFLDDST) the chain is on the extracellular side. Residues 270–290 (CYSIYIFVMHIYATVSPFVFM) form a helical membrane-spanning segment. At 291–310 (STEKHLVNFFRSMCEWIINM) the chain is on the cytoplasmic side.

This sequence belongs to the G-protein coupled receptor 1 family.

It is found in the cell membrane. In terms of biological role, putative pheromone receptor implicated in the regulation of social and reproductive behavior. The polypeptide is Vomeronasal type-1 receptor 47 (Vmn1r47) (Mus musculus (Mouse)).